A 342-amino-acid polypeptide reads, in one-letter code: MSSIPWIDNEFAYRALAHLPKFTQVNNSSTFKLRFRCPVCGDSKTDQNKARGWYYGDNNEGNIHCYNCNYHAPIGIYLKEFEPDLYREYIFEIRKEKGKSRPIEKPKELPKQPEKKIIKSLPSCVRLDKLAEDHPIIKYVKARCIPKDKWKYLWFTTEWPKLVNSIAPGTYKKEISEPRLVIPIYNANGKAESFQGRALKKDAPQKYITIEAYPEATKIYGVERVKDGDVYVLEGPIDSLFIENGIAITGGQLDLEVVPFKDRRVWVLDNEPRHPDTIKRMTKLVDAGERVMFWDKSPWKSKDVNDMIRKEGATPEQIMEYMKNNIAQGLMAKMRLSKYAKI.

Zn(2+)-binding residues include C37, C40, C65, and C68.

Belongs to the Tequatrovirus DNA primase family. As to quaternary structure, monomer. Hexamer. Interacts with the DnaB-like replicative helicase; this interaction forms the active primosome complex, which is composed of 6 helicase and 1 primase subunits and expresses full helicase and primase activities. Interacts (via C-terminus) with the single-stranded DNA-binding protein. Part of the replicase complex that includes the DNA polymerase, the polymerase clamp, the clamp loader complex, the single-stranded DNA binding protein, the primase, the DnaB-like replicative helicase and the helicase assembly factor.

Synthesizes short RNA primers for the lagging strand DNA replication. The primase synthesizes short RNA primers on the lagging strand that the polymerase elongates using dNTPs. Recognizes two trinucleotide sequences 5'-GTT-3' and 5'-GCT-3' in vitro, but uses only the first as the priming site in vivo. In Escherichia coli (Bacteriophage T4), this protein is DNA primase (61).